Reading from the N-terminus, the 119-residue chain is Urease subunit beta (119 aa).

This sequence belongs to the urease beta subunit family. Heterotrimer of UreA (gamma), UreB (beta) and UreC (alpha) subunits. Three heterotrimers associate to form the active enzyme.

It localises to the cytoplasm. The enzyme catalyses urea + 2 H2O + H(+) = hydrogencarbonate + 2 NH4(+). Its pathway is nitrogen metabolism; urea degradation; CO(2) and NH(3) from urea (urease route): step 1/1. The protein is Urease subunit beta of Tolumonas auensis (strain DSM 9187 / NBRC 110442 / TA 4).